The chain runs to 716 residues: Fatty acid oxidation complex subunit alpha (716 aa).

The segment at 1–189 (MIYQSPTIQV…KVGAVDAVVA (189 aa)) is enoyl-CoA hydratase/isomerase. Position 296 (Asp296) interacts with substrate. The interval 311–716 (KEVKNAAVLG…ATNNGSYYQA (406 aa)) is 3-hydroxyacyl-CoA dehydrogenase. NAD(+)-binding positions include Met324, Asp343, 400–402 (VVE), Lys407, and Ser429. Residue His450 is the For 3-hydroxyacyl-CoA dehydrogenase activity of the active site. Asn453 lines the NAD(+) pocket. 2 residues coordinate substrate: Asn500 and Tyr660.

This sequence in the N-terminal section; belongs to the enoyl-CoA hydratase/isomerase family. The protein in the C-terminal section; belongs to the 3-hydroxyacyl-CoA dehydrogenase family. Heterotetramer of two alpha chains (FadB) and two beta chains (FadA).

It catalyses the reaction a (3S)-3-hydroxyacyl-CoA + NAD(+) = a 3-oxoacyl-CoA + NADH + H(+). The enzyme catalyses a (3S)-3-hydroxyacyl-CoA = a (2E)-enoyl-CoA + H2O. The catalysed reaction is a 4-saturated-(3S)-3-hydroxyacyl-CoA = a (3E)-enoyl-CoA + H2O. It carries out the reaction (3S)-3-hydroxybutanoyl-CoA = (3R)-3-hydroxybutanoyl-CoA. It catalyses the reaction a (3Z)-enoyl-CoA = a 4-saturated (2E)-enoyl-CoA. The enzyme catalyses a (3E)-enoyl-CoA = a 4-saturated (2E)-enoyl-CoA. It functions in the pathway lipid metabolism; fatty acid beta-oxidation. In terms of biological role, involved in the aerobic and anaerobic degradation of long-chain fatty acids via beta-oxidation cycle. Catalyzes the formation of 3-oxoacyl-CoA from enoyl-CoA via L-3-hydroxyacyl-CoA. It can also use D-3-hydroxyacyl-CoA and cis-3-enoyl-CoA as substrate. This Shewanella putrefaciens (strain CN-32 / ATCC BAA-453) protein is Fatty acid oxidation complex subunit alpha.